The primary structure comprises 599 residues: Elongation factor 4 (599 aa).

A tr-type G domain is found at 2 to 184 (KHIRNFSIIA…RLVRDIPPPQ (183 aa)). Residues 14-19 (DHGKST) and 131-134 (NKID) contribute to the GTP site.

The protein belongs to the TRAFAC class translation factor GTPase superfamily. Classic translation factor GTPase family. LepA subfamily.

The protein resides in the cell inner membrane. The catalysed reaction is GTP + H2O = GDP + phosphate + H(+). Required for accurate and efficient protein synthesis under certain stress conditions. May act as a fidelity factor of the translation reaction, by catalyzing a one-codon backward translocation of tRNAs on improperly translocated ribosomes. Back-translocation proceeds from a post-translocation (POST) complex to a pre-translocation (PRE) complex, thus giving elongation factor G a second chance to translocate the tRNAs correctly. Binds to ribosomes in a GTP-dependent manner. In Yersinia enterocolitica serotype O:8 / biotype 1B (strain NCTC 13174 / 8081), this protein is Elongation factor 4.